The primary structure comprises 307 residues: Protein rep (307 aa).

Y219 contacts DNA.

The protein belongs to the Gram-positive plasmids replication protein type 1 family.

In Bacillus sp, this protein is Protein rep (repA).